Here is a 60-residue protein sequence, read N- to C-terminus: UPF0434 protein HCH_02705 (60 aa).

It belongs to the UPF0434 family.

The chain is UPF0434 protein HCH_02705 from Hahella chejuensis (strain KCTC 2396).